Reading from the N-terminus, the 420-residue chain is 3-phosphoshikimate 1-carboxyvinyltransferase (420 aa).

Residues Lys26, Ser27, and Arg31 each coordinate 3-phosphoshikimate. Lys26 lines the phosphoenolpyruvate pocket. Phosphoenolpyruvate contacts are provided by Gly97 and Arg125. Positions 170, 171, 172, 297, 320, and 324 each coordinate 3-phosphoshikimate. Position 172 (Gln172) interacts with phosphoenolpyruvate. The Proton acceptor role is filled by Asp297. 3 residues coordinate phosphoenolpyruvate: Arg328, Arg375, and Lys400.

It belongs to the EPSP synthase family. Monomer.

Its subcellular location is the cytoplasm. It carries out the reaction 3-phosphoshikimate + phosphoenolpyruvate = 5-O-(1-carboxyvinyl)-3-phosphoshikimate + phosphate. It functions in the pathway metabolic intermediate biosynthesis; chorismate biosynthesis; chorismate from D-erythrose 4-phosphate and phosphoenolpyruvate: step 6/7. Catalyzes the transfer of the enolpyruvyl moiety of phosphoenolpyruvate (PEP) to the 5-hydroxyl of shikimate-3-phosphate (S3P) to produce enolpyruvyl shikimate-3-phosphate and inorganic phosphate. The polypeptide is 3-phosphoshikimate 1-carboxyvinyltransferase (Rhizobium etli (strain ATCC 51251 / DSM 11541 / JCM 21823 / NBRC 15573 / CFN 42)).